The following is an 81-amino-acid chain: ATP synthase subunit c (81 aa).

2 helical membrane passes run 7–27 (AASV…PGIG) and 57–77 (LAFM…LLFA).

This sequence belongs to the ATPase C chain family. In terms of assembly, F-type ATPases have 2 components, F(1) - the catalytic core - and F(0) - the membrane proton channel. F(1) has five subunits: alpha(3), beta(3), gamma(1), delta(1), epsilon(1). F(0) has four main subunits: a(1), b(1), b'(1) and c(10-14). The alpha and beta chains form an alternating ring which encloses part of the gamma chain. F(1) is attached to F(0) by a central stalk formed by the gamma and epsilon chains, while a peripheral stalk is formed by the delta, b and b' chains.

Its subcellular location is the cellular thylakoid membrane. F(1)F(0) ATP synthase produces ATP from ADP in the presence of a proton or sodium gradient. F-type ATPases consist of two structural domains, F(1) containing the extramembraneous catalytic core and F(0) containing the membrane proton channel, linked together by a central stalk and a peripheral stalk. During catalysis, ATP synthesis in the catalytic domain of F(1) is coupled via a rotary mechanism of the central stalk subunits to proton translocation. Functionally, key component of the F(0) channel; it plays a direct role in translocation across the membrane. A homomeric c-ring of between 10-14 subunits forms the central stalk rotor element with the F(1) delta and epsilon subunits. The polypeptide is ATP synthase subunit c (Synechococcus sp. (strain CC9311)).